Here is a 1369-residue protein sequence, read N- to C-terminus: DNA-directed RNA polymerase subunit beta' (1369 aa).

The segment at 1 to 26 is disordered; that stretch reads MTSSSPKTRKSSTKSKAKRGSKSKKA. Basic residues predominate over residues 7 to 24; sequence KTRKSSTKSKAKRGSKSK. Zn(2+) contacts are provided by cysteine 253, cysteine 320, cysteine 327, and cysteine 330. Residues 1294–1369 form a disordered region; the sequence is TVDMPSSPVA…LQEEGLLSDE (76 aa). The span at 1342-1351 shows a compositional bias: acidic residues; sequence DDELSAEDQM. Positions 1357 to 1369 are enriched in low complexity; that stretch reads LEGLQEEGLLSDE.

The protein belongs to the RNA polymerase beta' chain family. RpoC2 subfamily. In cyanobacteria the RNAP catalytic core is composed of 2 alpha, 1 beta, 1 beta', 1 gamma and 1 omega subunit. When a sigma factor is associated with the core the holoenzyme is formed, which can initiate transcription. Requires Zn(2+) as cofactor.

The catalysed reaction is RNA(n) + a ribonucleoside 5'-triphosphate = RNA(n+1) + diphosphate. In terms of biological role, DNA-dependent RNA polymerase catalyzes the transcription of DNA into RNA using the four ribonucleoside triphosphates as substrates. The chain is DNA-directed RNA polymerase subunit beta' from Prochlorococcus marinus (strain NATL2A).